A 154-amino-acid polypeptide reads, in one-letter code: Calmodulin-like protein 6 (154 aa).

EF-hand domains are found at residues 1 to 36 (MDST…LGII), 37 to 72 (IPED…IMVE), 77 to 112 (VGEE…LGLK), and 115 to 150 (KTLE…GRFF). 19 residues coordinate Ca(2+): Asp14, Asp16, Asp18, Lys20, Glu25, Asp50, Asn52, Asp54, Cys56, Glu61, Asp90, Asn92, Asp94, Glu101, Asp128, Asp130, Asp132, Arg134, and Glu139.

This sequence belongs to the calmodulin family.

Potential calcium sensor. The protein is Calmodulin-like protein 6 (CML6) of Arabidopsis thaliana (Mouse-ear cress).